We begin with the raw amino-acid sequence, 463 residues long: L-seryl-tRNA(Sec) selenium transferase (463 aa).

K295 carries the N6-(pyridoxal phosphate)lysine modification.

It belongs to the SelA family. Homodecamer; pentamer of dimers. Binds only one seryl-tRNA(Sec) per dimer. It depends on pyridoxal 5'-phosphate as a cofactor.

The protein resides in the cytoplasm. The catalysed reaction is L-seryl-tRNA(Sec) + selenophosphate + H(+) = L-selenocysteinyl-tRNA(Sec) + phosphate. It functions in the pathway aminoacyl-tRNA biosynthesis; selenocysteinyl-tRNA(Sec) biosynthesis; selenocysteinyl-tRNA(Sec) from L-seryl-tRNA(Sec) (bacterial route): step 1/1. Converts seryl-tRNA(Sec) to selenocysteinyl-tRNA(Sec) required for selenoprotein biosynthesis. This is L-seryl-tRNA(Sec) selenium transferase from Escherichia fergusonii (strain ATCC 35469 / DSM 13698 / CCUG 18766 / IAM 14443 / JCM 21226 / LMG 7866 / NBRC 102419 / NCTC 12128 / CDC 0568-73).